Here is a 133-residue protein sequence, read N- to C-terminus: Small ribosomal subunit protein uS8c (133 aa).

Disordered stretches follow at residues 1 to 23 (MGND…GAET) and 44 to 133 (FSGN…HVWR). Polar residues-rich tracts occupy residues 12 to 23 (APRNASSRGAET) and 55 to 66 (TNRFPVSTSKYQ). Residues 67–81 (GRTRKARITTRRRVS) are compositionally biased toward basic residues. The segment covering 114-133 (TDREARQKRIGGEAPRHVWR) has biased composition (basic and acidic residues).

This sequence belongs to the universal ribosomal protein uS8 family. In terms of assembly, part of the 30S ribosomal subunit.

The protein localises to the plastid. It is found in the chloroplast. Functionally, one of the primary rRNA binding proteins, it binds directly to 16S rRNA central domain where it helps coordinate assembly of the platform of the 30S subunit. The polypeptide is Small ribosomal subunit protein uS8c (rps8) (Selaginella uncinata (Blue spike-moss)).